The sequence spans 2472 residues: Highly reducing polyketide synthase xilA (2472 aa).

One can recognise a Ketosynthase family 3 (KS3) domain in the interval 1–417; it reads MPGGVRDLPA…GTNGHCIIDD (417 aa). Catalysis depends on for beta-ketoacyl synthase activity residues cysteine 162, histidine 298, and histidine 340. The interval 442-502 is disordered; the sequence is NDINGKSGTN…QRKHHHPKTD (61 aa). A compositionally biased stretch (low complexity) spans 450-489; that stretch reads TNGANGANRVNGVNGVNGVNGVNGANGHSNASLLSNGSNN. Residues 597 to 932 form the Malonyl-CoA:ACP transacylase (MAT) domain; the sequence is FIFTGQGAQW…CTGTLFVHNV (336 aa). Residues 991 to 1129 form an N-terminal hotdog fold region; sequence HDLLGSKVPG…GQIKVEVAKF (139 aa). The PKS/mFAS DH domain maps to 991–1294; sequence HDLLGSKVPG…FTSLNNEQES (304 aa). Histidine 1023 functions as the Proton acceptor; for dehydratase activity in the catalytic mechanism. The C-terminal hotdog fold stretch occupies residues 1141 to 1294; the sequence is GRLVDAQTWY…FTSLNNEQES (154 aa). Aspartate 1207 functions as the Proton donor; for dehydratase activity in the catalytic mechanism. The interval 1289–1505 is methyltransferase (CMeT) domain; sequence NNEQESPSTG…IITVHALRSI (217 aa). An Enoyl reductase (ER) domain is found at 1724–2036; the sequence is GLLTSLYFKP…KGTHIGKMVI (313 aa). Residues 2060-2239 enclose the Ketoreductase (KR) domain; that stretch reads ASYILVGGLS…ATTVSLGFIK (180 aa). Positions 2391-2469 constitute a Carrier domain; that stretch reads ETVKLVSDAI…SIARVIVEEA (79 aa). Serine 2428 is subject to O-(pantetheine 4'-phosphoryl)serine.

Requires pantetheine 4'-phosphate as cofactor.

The protein operates within secondary metabolite biosynthesis. Its function is as follows. Highly reducing polyketide synthase; part of the gene cluster that mediates the biosynthesis of the 6-methyl-2-pyrone derivative xylariolide D. XilA produces the 5-alkyl-6-methyl-2-pyrone backbone called prexylariolide D via sequential condensations of 4 malonyl-CoA units with one acetyl-CoA starter unit. During the biosynthesis, the linear polyketide chain is branched by the addition of an acetyl unit as the origin of the methyl group at the 2-pyrone ring. Prexylariolide D is then hydroxylated at the side chain by xilC to form the final product, xylariolide D. This is Highly reducing polyketide synthase xilA from Penicillium crustosum (Blue mold fungus).